The chain runs to 210 residues: Urease accessory protein UreF (210 aa).

Belongs to the UreF family. As to quaternary structure, ureD, UreF and UreG form a complex that acts as a GTP-hydrolysis-dependent molecular chaperone, activating the urease apoprotein by helping to assemble the nickel containing metallocenter of UreC. The UreE protein probably delivers the nickel.

The protein resides in the cytoplasm. Its function is as follows. Required for maturation of urease via the functional incorporation of the urease nickel metallocenter. This is Urease accessory protein UreF from Cereibacter sphaeroides (strain ATCC 17023 / DSM 158 / JCM 6121 / CCUG 31486 / LMG 2827 / NBRC 12203 / NCIMB 8253 / ATH 2.4.1.) (Rhodobacter sphaeroides).